Consider the following 86-residue polypeptide: Small ribosomal subunit protein bS20 (86 aa).

Belongs to the bacterial ribosomal protein bS20 family.

In terms of biological role, binds directly to 16S ribosomal RNA. The sequence is that of Small ribosomal subunit protein bS20 from Arthrobacter sp. (strain FB24).